A 290-amino-acid polypeptide reads, in one-letter code: Ras-like protein 1 (290 aa).

11–18 (GGGGVGKS) serves as a coordination point for GTP. Positions 33-41 (YDPTIEDSY) match the Effector region motif. GTP contacts are provided by residues 58–62 (DTAGQ) and 117–120 (NKCD). Positions 176–290 (EKQQQQQQQQ…KSKNGCCVIV (115 aa)) are disordered. Composition is skewed to low complexity over residues 178–216 (QQQQ…NNNN) and 246–283 (PNQS…SKSK). Cys-286 is lipidated: S-palmitoyl cysteine. At Cys-287 the chain carries Cysteine methyl ester. Cys-287 carries the S-farnesyl cysteine lipid modification. Positions 288 to 290 (VIV) are cleaved as a propeptide — removed in mature form.

It belongs to the small GTPase superfamily. Ras family.

The protein localises to the cell membrane. Its activity is regulated as follows. Alternates between an inactive form bound to GDP and an active form bound to GTP. Activated by a guanine nucleotide-exchange factor (GEF) and inactivated by a GTPase-activating protein (GAP). In terms of biological role, required for the regulation of both a MAP kinase signaling pathway and a cAMP signaling pathway. The activation of these pathways contributes to the pathogenicity of the cells through the induction of the morphological transition from the yeast to the polarized filamentous form. The polypeptide is Ras-like protein 1 (RAS1) (Candida albicans (strain SC5314 / ATCC MYA-2876) (Yeast)).